A 405-amino-acid chain; its full sequence is Peroxisome biogenesis factor 3 (405 aa).

At 1 to 26 (MENFQFEDLSPNKVSKVYQDLKKFGS) the chain is on the cytoplasmic side. Residues 27 to 49 (FLYNHKMGVFLVSFSSGVAYLYH) form a helical membrane-spanning segment. Over 50-124 (NITQSHKRKQ…EKLKLTDQLK (75 aa)) the chain is Peroxisomal. A helical transmembrane segment spans residues 125-144 (VSIITKLFSVLYIIPMVTIF). The Cytoplasmic segment spans residues 145 to 405 (NRLQINLIGK…NDLDFNKVQF (261 aa)).

Belongs to the peroxin-3 family.

It is found in the peroxisome membrane. In terms of biological role, involved in peroxisome biosynthesis. The chain is Peroxisome biogenesis factor 3 (pex3) from Dictyostelium discoideum (Social amoeba).